The sequence spans 684 residues: Amino-acid acetyltransferase, mitochondrial (684 aa).

Residues 414–439 form a disordered region; the sequence is PQDATNSASEPRDPSQLSTVATRRKR. The segment covering 415-434 has biased composition (polar residues); sequence QDATNSASEPRDPSQLSTVA. Residues 505 to 674 form the N-acetyltransferase domain; the sequence is GKSRMTLNDP…YEGVCRGIEP (170 aa).

The protein belongs to the acetyltransferase family.

Its subcellular location is the mitochondrion. It catalyses the reaction L-glutamate + acetyl-CoA = N-acetyl-L-glutamate + CoA + H(+). The protein operates within amino-acid biosynthesis; L-arginine biosynthesis; N(2)-acetyl-L-ornithine from L-glutamate: step 1/4. Functionally, N-acetylglutamate synthase involved in arginine biosynthesis. The sequence is that of Amino-acid acetyltransferase, mitochondrial (ARG2) from Ajellomyces capsulatus (strain NAm1 / WU24) (Darling's disease fungus).